The primary structure comprises 263 residues: Pro-opiomelanocortin (263 aa).

The signal sequence occupies residues 1 to 25 (MLHPVWGCVVAVMGVLWFYSSGVQS). Pyrrolidone carboxylic acid is present on Gln-26. 2 disulfides stabilise this stretch: Cys-27–Cys-49 and Cys-33–Cys-45. Residues 114-142 (SQPRDEVERESEEEEGLQQHRRDDKRSYS) form a disordered region. Over residues 130 to 142 (LQQHRRDDKRSYS) the composition is skewed to basic and acidic residues. Position 152 is a valine amide (Val-152).

This sequence belongs to the POMC family. In terms of processing, specific enzymatic cleavages at paired basic residues yield the different active peptides.

The protein resides in the secreted. Its function is as follows. Stimulates the adrenal glands to release cortisol. In terms of biological role, anorexigenic peptide. Increases the pigmentation of skin by increasing melanin production in melanocytes. Increases the pigmentation of skin by increasing melanin production in melanocytes. Functionally, endogenous orexigenic opiate. Its function is as follows. Endogenous opiate. The chain is Pro-opiomelanocortin (pomc) from Acipenser transmontanus (White sturgeon).